A 372-amino-acid polypeptide reads, in one-letter code: 3,5-dihydroxyphenylacetyl-CoA synthase (372 aa).

Residue C160 is part of the active site.

The protein belongs to the thiolase-like superfamily. Chalcone/stilbene synthases family.

It carries out the reaction 4 malonyl-CoA + 4 H(+) = (3,5-dihydroxyphenyl)acetyl-CoA + 4 CO2 + 3 CoA + H2O. It functions in the pathway antibiotic biosynthesis. In terms of biological role, involved in the biosynthesis of the nonproteinogenic amino acid monomer (S)-3,5-dihydroxyphenylglycine (Dpg) responsible of the production of balhimycin antibiotic. Catalyzes the Claisen condensation of four molecules of malonyl-CoA to yield 3,5-dihydroxyphenylacetyl-CoA (DPA-CoA) and three free coenzyme A (CoA). DpgA requires the presence of the dehydratases DpgB and DpgD to facilitate the aromatization of the DPA-S-DgpA or DPA-S-CoA intermediate. This chain is 3,5-dihydroxyphenylacetyl-CoA synthase, found in Amycolatopsis balhimycina.